Reading from the N-terminus, the 213-residue chain is Endonuclease III (213 aa).

Residues 108-127 (FKELIKLPGVGRKTANVVLN) form the HhH domain. Residues Cys187, Cys194, Cys197, and Cys203 each contribute to the [4Fe-4S] cluster site.

The protein belongs to the Nth/MutY family. It depends on [4Fe-4S] cluster as a cofactor.

It catalyses the reaction 2'-deoxyribonucleotide-(2'-deoxyribose 5'-phosphate)-2'-deoxyribonucleotide-DNA = a 3'-end 2'-deoxyribonucleotide-(2,3-dehydro-2,3-deoxyribose 5'-phosphate)-DNA + a 5'-end 5'-phospho-2'-deoxyribonucleoside-DNA + H(+). In terms of biological role, DNA repair enzyme that has both DNA N-glycosylase activity and AP-lyase activity. The DNA N-glycosylase activity releases various damaged pyrimidines from DNA by cleaving the N-glycosidic bond, leaving an AP (apurinic/apyrimidinic) site. The AP-lyase activity cleaves the phosphodiester bond 3' to the AP site by a beta-elimination, leaving a 3'-terminal unsaturated sugar and a product with a terminal 5'-phosphate. The protein is Endonuclease III of Rickettsia felis (strain ATCC VR-1525 / URRWXCal2) (Rickettsia azadi).